Here is a 502-residue protein sequence, read N- to C-terminus: Thermosome subunit beta (502 aa).

Belongs to the TCP-1 chaperonin family. In terms of assembly, forms a Heterooligomeric complex of two stacked eight-membered rings.

In terms of biological role, molecular chaperone; binds unfolded polypeptides in vitro, and has a weak ATPase activity. This is Thermosome subunit beta (thsB) from Desulfurococcus mucosus (Desulfurococcus mobilis).